We begin with the raw amino-acid sequence, 173 residues long: Protein tyrosine phosphatase type IVA 3 (173 aa).

The Tyrosine-protein phosphatase domain maps to 8-161; that stretch reads APVEVSYRHM…YRPKQRLRFK (154 aa). A disulfide bridge links Cys49 with Cys104. Asp72 acts as the Proton donor in catalysis. Residue Cys104 is the Phosphocysteine intermediate of the active site. Position 110 (Arg110) interacts with substrate. The residue at position 170 (Cys170) is a Cysteine methyl ester. A lipid anchor (S-farnesyl cysteine) is attached at Cys170. A propeptide spans 171-173 (removed in mature form); it reads CVM.

It belongs to the protein-tyrosine phosphatase family. In terms of assembly, interacts with tubulin. In terms of processing, farnesylated. Farnesylation is required for membrane targeting. Unfarnesylated forms are shifted into the nucleus. In terms of tissue distribution, present in the small intestine, where it is located in the differentiated epithelial cells of the villus but not in the proliferating crypt cells (at protein level). Expressed in heart and skeletal muscle, and at lower levels in lung, spleen and testis.

The protein resides in the cell membrane. The protein localises to the early endosome. The catalysed reaction is O-phospho-L-tyrosyl-[protein] + H2O = L-tyrosyl-[protein] + phosphate. Inhibited by sodium orthovanadate and peroxovanadium compounds, and by pentamidine. In terms of biological role, protein tyrosine phosphatase which stimulates progression from G1 into S phase during mitosis. Enhances cell proliferation, cell motility and invasive activity, and promotes cancer metastasis. May be involved in the progression of cardiac hypertrophy by inhibiting intracellular calcium mobilization in response to angiotensin II. This is Protein tyrosine phosphatase type IVA 3 (Ptp4a3) from Mus musculus (Mouse).